The following is a 435-amino-acid chain: Serine/threonine-protein kinase 40 (435 aa).

Residues 35–332 (FILGPRLGNS…EELDSLSSII (298 aa)) form the Protein kinase domain. ATP is bound by residues 41 to 49 (LGNSPVPSI) and Lys66. Asp197 functions as the Proton acceptor in the catalytic mechanism.

Belongs to the protein kinase superfamily. CAMK Ser/Thr protein kinase family.

It localises to the nucleus. The protein resides in the cytoplasm. It catalyses the reaction L-seryl-[protein] + ATP = O-phospho-L-seryl-[protein] + ADP + H(+). The catalysed reaction is L-threonyl-[protein] + ATP = O-phospho-L-threonyl-[protein] + ADP + H(+). Functionally, may be a negative regulator of NF-kappa-B and p53-mediated gene transcription. The chain is Serine/threonine-protein kinase 40 (STK40) from Gallus gallus (Chicken).